The primary structure comprises 158 residues: NAD(P)H-quinone oxidoreductase subunit J, chloroplastic (158 aa).

This sequence belongs to the complex I 30 kDa subunit family. In terms of assembly, NDH is composed of at least 16 different subunits, 5 of which are encoded in the nucleus.

Its subcellular location is the plastid. The protein localises to the chloroplast thylakoid membrane. It carries out the reaction a plastoquinone + NADH + (n+1) H(+)(in) = a plastoquinol + NAD(+) + n H(+)(out). It catalyses the reaction a plastoquinone + NADPH + (n+1) H(+)(in) = a plastoquinol + NADP(+) + n H(+)(out). NDH shuttles electrons from NAD(P)H:plastoquinone, via FMN and iron-sulfur (Fe-S) centers, to quinones in the photosynthetic chain and possibly in a chloroplast respiratory chain. The immediate electron acceptor for the enzyme in this species is believed to be plastoquinone. Couples the redox reaction to proton translocation, and thus conserves the redox energy in a proton gradient. This chain is NAD(P)H-quinone oxidoreductase subunit J, chloroplastic, found in Crucihimalaya wallichii (Rock-cress).